Reading from the N-terminus, the 263-residue chain is 5'-nucleotidase SurE (263 aa).

A divalent metal cation contacts are provided by aspartate 11, aspartate 12, serine 42, and asparagine 96.

This sequence belongs to the SurE nucleotidase family. The cofactor is a divalent metal cation.

It localises to the cytoplasm. It carries out the reaction a ribonucleoside 5'-phosphate + H2O = a ribonucleoside + phosphate. Nucleotidase that shows phosphatase activity on nucleoside 5'-monophosphates. The chain is 5'-nucleotidase SurE from Methanocorpusculum labreanum (strain ATCC 43576 / DSM 4855 / Z).